The following is a 508-amino-acid chain: Light-independent protochlorophyllide reductase subunit B (508 aa).

Aspartate 36 lines the [4Fe-4S] cluster pocket. The Proton donor role is filled by aspartate 294. A substrate-binding site is contributed by 429-430; sequence GM.

This sequence belongs to the ChlB/BchB/BchZ family. In terms of assembly, protochlorophyllide reductase is composed of three subunits; ChlL, ChlN and ChlB. Forms a heterotetramer of two ChlB and two ChlN subunits. [4Fe-4S] cluster is required as a cofactor.

The catalysed reaction is chlorophyllide a + oxidized 2[4Fe-4S]-[ferredoxin] + 2 ADP + 2 phosphate = protochlorophyllide a + reduced 2[4Fe-4S]-[ferredoxin] + 2 ATP + 2 H2O. It participates in porphyrin-containing compound metabolism; chlorophyll biosynthesis (light-independent). In terms of biological role, component of the dark-operative protochlorophyllide reductase (DPOR) that uses Mg-ATP and reduced ferredoxin to reduce ring D of protochlorophyllide (Pchlide) to form chlorophyllide a (Chlide). This reaction is light-independent. The NB-protein (ChlN-ChlB) is the catalytic component of the complex. The polypeptide is Light-independent protochlorophyllide reductase subunit B (Acaryochloris marina (strain MBIC 11017)).